The primary structure comprises 350 residues: Protein-arginine kinase (350 aa).

Positions 21–253 (IVISSRIRLA…VRLADQEREA (233 aa)) constitute a Phosphagen kinase C-terminal domain. Residues 24-28 (SSRIR), His-90, Arg-124, 175-179 (RASTM), and 206-211 (RGLYGE) contribute to the ATP site. Positions 336-341 (RDVHRA) match the RDXXRA motif of the pArg binding pocket involved in allosteric regulation motif.

This sequence belongs to the ATP:guanido phosphotransferase family.

The catalysed reaction is L-arginyl-[protein] + ATP = N(omega)-phospho-L-arginyl-[protein] + ADP + H(+). Its activity is regulated as follows. Appears to be allosterically activated by the binding of pArg-containing polypeptides to the pArg-binding pocket localized in the C-terminal domain of McsB. Functionally, catalyzes the specific phosphorylation of arginine residues in proteins. This is Protein-arginine kinase from Moorella thermoacetica (strain ATCC 39073 / JCM 9320).